A 122-amino-acid polypeptide reads, in one-letter code: Immunoglobulin lambda variable 4-3 (122 aa).

An N-terminal signal peptide occupies residues Met1–Ala19. Residues Leu20–Ser44 form a framework-1 region. An Ig-like domain is found at Pro21–Gly122. The cysteines at positions 41 and 111 are disulfide-linked. The tract at residues Ser45–Thr51 is complementarity-determining-1. The interval Ile52–Lys68 is framework-2. A complementarity-determining-2 region spans residues Val69 to His75. The interval Ser76–Cys111 is framework-3. The segment at Gly112–Gly122 is complementarity-determining-3.

As to quaternary structure, immunoglobulins are composed of two identical heavy chains and two identical light chains; disulfide-linked.

It is found in the secreted. The protein localises to the cell membrane. Functionally, v region of the variable domain of immunoglobulin light chains that participates in the antigen recognition. Immunoglobulins, also known as antibodies, are membrane-bound or secreted glycoproteins produced by B lymphocytes. In the recognition phase of humoral immunity, the membrane-bound immunoglobulins serve as receptors which, upon binding of a specific antigen, trigger the clonal expansion and differentiation of B lymphocytes into immunoglobulins-secreting plasma cells. Secreted immunoglobulins mediate the effector phase of humoral immunity, which results in the elimination of bound antigens. The antigen binding site is formed by the variable domain of one heavy chain, together with that of its associated light chain. Thus, each immunoglobulin has two antigen binding sites with remarkable affinity for a particular antigen. The variable domains are assembled by a process called V-(D)-J rearrangement and can then be subjected to somatic hypermutations which, after exposure to antigen and selection, allow affinity maturation for a particular antigen. This Homo sapiens (Human) protein is Immunoglobulin lambda variable 4-3.